A 495-amino-acid polypeptide reads, in one-letter code: UDP-N-acetylmuramate--L-alanine ligase (495 aa).

Gly-153–Thr-159 serves as a coordination point for ATP.

The protein belongs to the MurCDEF family.

The protein localises to the cytoplasm. It catalyses the reaction UDP-N-acetyl-alpha-D-muramate + L-alanine + ATP = UDP-N-acetyl-alpha-D-muramoyl-L-alanine + ADP + phosphate + H(+). It participates in cell wall biogenesis; peptidoglycan biosynthesis. Its function is as follows. Cell wall formation. The chain is UDP-N-acetylmuramate--L-alanine ligase from Gloeothece citriformis (strain PCC 7424) (Cyanothece sp. (strain PCC 7424)).